We begin with the raw amino-acid sequence, 304 residues long: Nod factor export ATP-binding protein I (304 aa).

An ABC transporter domain is found at 6–236 (IDFRNVEKRY…EIGCDVIEIY (231 aa)). 38-45 (GPNGAGKT) is an ATP binding site.

It belongs to the ABC transporter superfamily. Lipooligosaccharide exporter (TC 3.A.1.102) family. The complex is composed of two ATP-binding proteins (NodI) and two transmembrane proteins (NodJ).

The protein resides in the cell inner membrane. In terms of biological role, part of the ABC transporter complex NodIJ involved in the export of the nodulation factors (Nod factors), the bacterial signal molecules that induce symbiosis and subsequent nodulation induction. Nod factors are LCO (lipo-chitin oligosaccharide), a modified beta-1,4-linked N-acetylglucosamine oligosaccharide. This subunit is responsible for energy coupling to the transport system. In Burkholderia orbicola (strain AU 1054), this protein is Nod factor export ATP-binding protein I.